Consider the following 323-residue polypeptide: tRNA dimethylallyltransferase (323 aa).

ATP is bound at residue 12 to 19 (GPTAAGKT). Residue 14 to 19 (TAAGKT) participates in substrate binding. Interaction with substrate tRNA regions lie at residues 37-40 (DSAL) and 161-165 (QRLIR).

It belongs to the IPP transferase family. Monomer. It depends on Mg(2+) as a cofactor.

It catalyses the reaction adenosine(37) in tRNA + dimethylallyl diphosphate = N(6)-dimethylallyladenosine(37) in tRNA + diphosphate. Functionally, catalyzes the transfer of a dimethylallyl group onto the adenine at position 37 in tRNAs that read codons beginning with uridine, leading to the formation of N6-(dimethylallyl)adenosine (i(6)A). In Pseudomonas putida (strain ATCC 47054 / DSM 6125 / CFBP 8728 / NCIMB 11950 / KT2440), this protein is tRNA dimethylallyltransferase.